A 224-amino-acid polypeptide reads, in one-letter code: MTIAEHDNVFIFVPNLIGYARIVLALIAFWFMSTNYVISGWCYVTSALLDAVDGQAARAFNQSTRFGAMLDQLTDRCGTTGLLVTLAYFYPRYMFWFQLSIAIDVACHWLFMQTSVVVGRSSHKVNDNFIMRLYYQKDILTFMCCVNELFYVCLYLLHFTYGPLIFGASLFKILAFLTGPFAVLKALISVMHAYVAGIDLAAVDVRERQERRQKSEPVSGKKVE.

Topologically, residues 1–8 (MTIAEHDN) are cytoplasmic. A helical membrane pass occupies residues 9–29 (VFIFVPNLIGYARIVLALIAF). Topologically, residues 30–35 (WFMSTN) are lumenal. The helical transmembrane segment at 36–52 (YVISGWCYVTSALLDAV) threads the bilayer. Residues D50 and D53 each coordinate Mg(2+). The Cytoplasmic portion of the chain corresponds to 53-76 (DGQAARAFNQSTRFGAMLDQLTDR). Residues G54, R58, and T64 each contribute to the a CDP-1,2-diacyl-sn-glycerol site. 2 residues coordinate Mg(2+): D71 and D75. The active-site Proton acceptor is the D75. Residues 77 to 97 (CGTTGLLVTLAYFYPRYMFWF) traverse the membrane as a helical segment. A topological domain (lumenal) is located at residue Q98. Residues 99-119 (LSIAIDVACHWLFMQTSVVVG) traverse the membrane as a helical segment. Residues 120–138 (RSSHKVNDNFIMRLYYQKD) are Cytoplasmic-facing. The chain crosses the membrane as a helical span at residues 139–159 (ILTFMCCVNELFYVCLYLLHF). Topologically, residues 160 to 163 (TYGP) are lumenal. A helical membrane pass occupies residues 164–184 (LIFGASLFKILAFLTGPFAVL). The Cytoplasmic segment spans residues 185 to 224 (KALISVMHAYVAGIDLAAVDVRERQERRQKSEPVSGKKVE).

It belongs to the CDP-alcohol phosphatidyltransferase class-I family. The cofactor is Mn(2+). Requires Mg(2+) as cofactor. As to expression, in adults, expression is higher in the head than in the body (at protein level).

It is found in the apical cell membrane. Its subcellular location is the lateral cell membrane. It carries out the reaction a CDP-1,2-diacyl-sn-glycerol + myo-inositol = a 1,2-diacyl-sn-glycero-3-phospho-(1D-myo-inositol) + CMP + H(+). In terms of biological role, catalyzes the biosynthesis of phosphatidylinositol (PtdIns) as well as PtdIns:inositol exchange reaction. May thus act to reduce an excessive cellular PtdIns content. The exchange activity is due to the reverse reaction of PtdIns synthase and is dependent on CMP, which is tightly bound to the enzyme. Required for the regeneration of the signaling molecule phosphatidylinositol 4,5-bisphosphate (PtdInsP2) from phosphatidic acid (PA) and maintenance of its steady supply during signaling, thus playing an essential role during phospholipase C-mediated transduction. This function is essential in photoreceptors for light-activated recycling of PtdInsP2 during phototransduction. As a key enzyme of the phosphoinositide pathway, indirectly involved in the polarized secretion of basal membrane (BM) proteins in follicle epithelial (FE) cells through promoting PtdInsP2 synthesis in the apical and lateral plasma membranes of FE cells. PtdInsP2 controls the localization of Crag and perhaps the localization and expression of strat, both of which are essential for restricting the secretion of BM proteins to the basal surface. The protein is CDP-diacylglycerol--inositol 3-phosphatidyltransferase of Drosophila melanogaster (Fruit fly).